The chain runs to 365 residues: Succinyl-diaminopimelate desuccinylase (365 aa).

Residue His65 coordinates Zn(2+). Asp67 is a catalytic residue. Asp96 contributes to the Zn(2+) binding site. The active-site Proton acceptor is the Glu126. Zn(2+) is bound by residues Glu127, Glu155, and His340.

Belongs to the peptidase M20A family. DapE subfamily. Homodimer. Zn(2+) is required as a cofactor. Co(2+) serves as cofactor.

It carries out the reaction N-succinyl-(2S,6S)-2,6-diaminopimelate + H2O = (2S,6S)-2,6-diaminopimelate + succinate. The protein operates within amino-acid biosynthesis; L-lysine biosynthesis via DAP pathway; LL-2,6-diaminopimelate from (S)-tetrahydrodipicolinate (succinylase route): step 3/3. Functionally, catalyzes the hydrolysis of N-succinyl-L,L-diaminopimelic acid (SDAP), forming succinate and LL-2,6-diaminopimelate (DAP), an intermediate involved in the bacterial biosynthesis of lysine and meso-diaminopimelic acid, an essential component of bacterial cell walls. In Campylobacter jejuni subsp. jejuni serotype O:6 (strain 81116 / NCTC 11828), this protein is Succinyl-diaminopimelate desuccinylase.